The following is a 74-amino-acid chain: Ubiquitin-like protein FUBI (74 aa).

This sequence belongs to the ubiquitin family.

This is Ubiquitin-like protein FUBI (FAU) from Bos taurus (Bovine).